Reading from the N-terminus, the 201-residue chain is 3-isopropylmalate dehydratase small subunit (201 aa).

It belongs to the LeuD family. LeuD type 1 subfamily. In terms of assembly, heterodimer of LeuC and LeuD.

It carries out the reaction (2R,3S)-3-isopropylmalate = (2S)-2-isopropylmalate. It functions in the pathway amino-acid biosynthesis; L-leucine biosynthesis; L-leucine from 3-methyl-2-oxobutanoate: step 2/4. Functionally, catalyzes the isomerization between 2-isopropylmalate and 3-isopropylmalate, via the formation of 2-isopropylmaleate. The protein is 3-isopropylmalate dehydratase small subunit of Ruegeria pomeroyi (strain ATCC 700808 / DSM 15171 / DSS-3) (Silicibacter pomeroyi).